The following is a 154-amino-acid chain: Holo-[acyl-carrier-protein] synthase (154 aa).

Mg(2+)-binding residues include D8 and E57.

It belongs to the P-Pant transferase superfamily. AcpS family. The cofactor is Mg(2+).

Its subcellular location is the cytoplasm. The enzyme catalyses apo-[ACP] + CoA = holo-[ACP] + adenosine 3',5'-bisphosphate + H(+). In terms of biological role, transfers the 4'-phosphopantetheine moiety from coenzyme A to a Ser of acyl-carrier-protein. The chain is Holo-[acyl-carrier-protein] synthase from Nitrosococcus oceani (strain ATCC 19707 / BCRC 17464 / JCM 30415 / NCIMB 11848 / C-107).